The sequence spans 452 residues: Protein CSN12 homolog (452 aa).

The 198-residue stretch at 249–446 (VTFKYYEGVL…GFVVLSKSGA (198 aa)) folds into the PCI domain.

The protein belongs to the CSN12 family.

In Neurospora crassa (strain ATCC 24698 / 74-OR23-1A / CBS 708.71 / DSM 1257 / FGSC 987), this protein is Protein CSN12 homolog (csn-8).